Here is a 468-residue protein sequence, read N- to C-terminus: Protein maelstrom 2 (468 aa).

The HMG box DNA-binding region spans 2-69 (PPKKHSGFMM…LTRVKKERLN (68 aa)). A disordered region spans residues 374 to 393 (KEDSPTVLSPASSRRSLASS). Over residues 381 to 393 (LSPASSRRSLASS) the composition is skewed to low complexity.

It belongs to the maelstrom family.

Its subcellular location is the cytoplasm. The protein localises to the nucleus. Involved both in the piRNA and miRNA metabolic processes. As a component of the meiotic nuage, plays a central role during oogenesis by repressing transposable elements and preventing their mobilization, which is essential for the germline integrity. Repression of transposable elements is mediated via the piRNA metabolic process, which mediates the repression of transposable elements during meiosis by forming complexes composed of piRNAs and Piwi proteins and governs the repression of transposons. As a nuclear component, it is required for proper differentiation in the germline stem cell (GSC) lineage by repressing microRNA-7 (miR-7), thereby acting as an indirect regulator of bag-of-marbles (Bam). Acts by binding to the promoter of miR-7 gene and repressing its expression; miR-7 repression alleviates the Bam repression by miR-7, thereby allowing differentiation in the germline stem cell (GSC) lineage. In Drosophila ananassae (Fruit fly), this protein is Protein maelstrom 2 (mael2).